A 460-amino-acid chain; its full sequence is Proton extrusion protein PxcA (460 aa).

Disordered stretches follow at residues 82–128 and 143–190; these read FSRL…QRRD and SRYK…GSGN. The segment covering 90–102 has biased composition (polar residues); that stretch reads QNGSGPTSAQDKA. Over residues 107–120 the composition is skewed to low complexity; it reads AAEANVSESSSENS. Polar residues predominate over residues 151-163; sequence KSQPISASISTSP. Positions 171-184 are enriched in low complexity; the sequence is QPTSTQPSSSNVSV. The next 4 helical transmembrane spans lie at 242–262, 337–357, 373–393, and 420–440; these read FLLL…NFLF, GLKN…LIFV, IYGL…DVFV, and FIYG…KYWI.

Belongs to the CemA family.

The protein localises to the cell inner membrane. Its function is as follows. Required for H(+) efflux immediately after light irradiation to form a rapid H(+) concentration gradient across the thylakoid membranes. Together with PxcL, contributes to transient H(+) uptake following dark to light transition. The chain is Proton extrusion protein PxcA from Synechococcus sp. (strain JA-2-3B'a(2-13)) (Cyanobacteria bacterium Yellowstone B-Prime).